We begin with the raw amino-acid sequence, 186 residues long: Glutathione peroxidase 7 (186 aa).

An N-terminal signal peptide occupies residues 1 to 18 (MVAAVATAWLLLWAAACA). Cys56 is an active-site residue.

This sequence belongs to the glutathione peroxidase family.

The protein localises to the secreted. It carries out the reaction 2 glutathione + H2O2 = glutathione disulfide + 2 H2O. It protects esophageal epithelia from hydrogen peroxide-induced oxidative stress. It suppresses acidic bile acid-induced reactive oxygen species (ROS) and protects against oxidative DNA damage and double-strand breaks. The protein is Glutathione peroxidase 7 (Gpx7) of Mus musculus (Mouse).